A 633-amino-acid polypeptide reads, in one-letter code: Mitochondrial Rho GTPase 1 (633 aa).

The Miro 1 domain maps to 1-170; the sequence is MATVRICVCG…FFLCQKAVTH (170 aa). Residues 1 to 603 are Cytoplasmic-facing; sequence MATVRICVCG…PRSEEDVEGK (603 aa). GTP-binding positions include 10-17, 59-63, and 115-118; these read GDEGTGKS, DTSAL, and NKSD. EF-hand domains follow at residues 186-221 and 306-341; these read AAVA…CFEK and EGYR…TPGL. Ca(2+) is bound by residues Asp199, Asp201, Asp203, Tyr205, Glu210, Asp319, Asp321, Asp323, and Glu330. The disordered stretch occupies residues 398–418; it reads NPSTTAALKVTRPRKRRKRPG. The segment covering 408-418 has biased composition (basic residues); it reads TRPRKRRKRPG. The 167-residue stretch at 422–588 folds into the Miro 2 domain; that stretch reads RNVVLGHVLG…FVHIAEAAME (167 aa). GTP is bound by residues 431–438, 467–471, and 537–540; these read GPPGSGKS, ELPGG, and LKAD. The helical; Anchor for type IV membrane protein transmembrane segment at 604–624 threads the bilayer; sequence WMAWGIALGAVVCAGAAAVMI. Residues 625 to 633 lie on the Mitochondrial intermembrane side of the membrane; the sequence is WRRVSGSGT.

Belongs to the mitochondrial Rho GTPase family.

The protein localises to the mitochondrion outer membrane. Its function is as follows. Mitochondrial GTPase involved in mitochondrial trafficking. Probably involved in control of anterograde transport of mitochondria and their subcellular distribution. The polypeptide is Mitochondrial Rho GTPase 1 (gem1) (Aspergillus oryzae (strain ATCC 42149 / RIB 40) (Yellow koji mold)).